Here is a 275-residue protein sequence, read N- to C-terminus: Phosphonoacetaldehyde hydrolase (275 aa).

D15 functions as the Nucleophile in the catalytic mechanism. Mg(2+)-binding residues include D15 and A17. The Schiff-base intermediate with substrate role is filled by K56. D189 is a Mg(2+) binding site.

The protein belongs to the HAD-like hydrolase superfamily. PhnX family. As to quaternary structure, homodimer. It depends on Mg(2+) as a cofactor.

The enzyme catalyses phosphonoacetaldehyde + H2O = acetaldehyde + phosphate + H(+). Involved in phosphonate degradation. This Pseudomonas putida (strain ATCC 700007 / DSM 6899 / JCM 31910 / BCRC 17059 / LMG 24140 / F1) protein is Phosphonoacetaldehyde hydrolase.